We begin with the raw amino-acid sequence, 385 residues long: Homoserine O-succinyltransferase (385 aa).

The AB hydrolase-1 domain maps to 45 to 355 (NAVLVCHALN…PHGHDAFLLD (311 aa)). Ser151 acts as the Nucleophile in catalysis. Arg221 contributes to the substrate binding site. Catalysis depends on residues Asp316 and His349. Position 350 (Asp350) interacts with substrate.

Belongs to the AB hydrolase superfamily. MetX family. In terms of assembly, homodimer.

Its subcellular location is the cytoplasm. It carries out the reaction L-homoserine + succinyl-CoA = O-succinyl-L-homoserine + CoA. Its pathway is amino-acid biosynthesis; L-methionine biosynthesis via de novo pathway; O-succinyl-L-homoserine from L-homoserine: step 1/1. Its function is as follows. Transfers a succinyl group from succinyl-CoA to L-homoserine, forming succinyl-L-homoserine. The protein is Homoserine O-succinyltransferase of Janthinobacterium sp. (strain Marseille) (Minibacterium massiliensis).